A 503-amino-acid polypeptide reads, in one-letter code: Glutamate--tRNA ligase (503 aa).

Residues 12–22 (PSPTGYLHVGG) carry the 'HIGH' region motif. Residues 259-263 (KLSKR) carry the 'KMSKS' region motif. Position 262 (lysine 262) interacts with ATP.

The protein belongs to the class-I aminoacyl-tRNA synthetase family. Glutamate--tRNA ligase type 1 subfamily. In terms of assembly, monomer.

The protein resides in the cytoplasm. It catalyses the reaction tRNA(Glu) + L-glutamate + ATP = L-glutamyl-tRNA(Glu) + AMP + diphosphate. Its function is as follows. Catalyzes the attachment of glutamate to tRNA(Glu) in a two-step reaction: glutamate is first activated by ATP to form Glu-AMP and then transferred to the acceptor end of tRNA(Glu). The sequence is that of Glutamate--tRNA ligase from Chloroherpeton thalassium (strain ATCC 35110 / GB-78).